A 525-amino-acid polypeptide reads, in one-letter code: Protein BSP1 (525 aa).

Disordered stretches follow at residues 21–40 (INKP…TPIE), 98–262 (QQQH…PSKM), 285–325 (LSSE…VPPK), and 339–525 (DKTG…PTKI). The segment covering 110–122 (IEPVRHIIPDRHS) has biased composition (basic and acidic residues). A compositionally biased stretch (polar residues) spans 148 to 162 (NRASSENVVKSTTSA). Basic and acidic residues-rich tracts occupy residues 171–182 (YKDDITAKKLDV), 201–223 (DKNK…EDNK), and 230–242 (KDQD…KPTR). Positions 251–261 (QLKSPPQSPSK) are enriched in polar residues. Over residues 285–297 (LSSEENSRSSLSE) the composition is skewed to low complexity. Composition is skewed to basic and acidic residues over residues 314–325 (KAEKKKPVVPPK) and 339–354 (DKTG…EPEF). Positions 382–398 (QNLSKNTENKKSVAQSK) are enriched in polar residues. Over residues 447 to 456 (EESEISDSEP) the composition is skewed to acidic residues. The segment covering 510-525 (NKSRSRGPKRKLPTKI) has biased composition (basic residues).

Its subcellular location is the cell membrane. It localises to the cytoplasm. The protein resides in the cytoskeleton. The protein localises to the actin patch. In terms of biological role, cortical patch protein involved in endocytosis. This chain is Protein BSP1 (BSP1), found in Candida glabrata (strain ATCC 2001 / BCRC 20586 / JCM 3761 / NBRC 0622 / NRRL Y-65 / CBS 138) (Yeast).